The chain runs to 389 residues: Packaging protein 3 (389 aa).

The interaction with packaging protein 1 stretch occupies residues 1–131; that stretch reads MHPVLRQMKP…VKAEVNFQTT (131 aa). The interval 350-389 is disordered; the sequence is EKENPDGSVSFQQHERGTQSHENGGHAEPAYSRRQLGRFY. A compositionally biased stretch (basic and acidic residues) spans 362–374; it reads QHERGTQSHENGG.

It belongs to the adenoviridae packaging protein 3 family. As to quaternary structure, part of the genome packaging complex composed of packaging proteins 1, 2 and 3; this complex specifically binds to the packaging sequence on the left end of viral genomic DNA and performs packaging of the viral genome. Interacts with hexon-linking protein IIIa; this interaction is required to promote correct genome packaging. Post-translationally, cleaved at different sites by the viral protease during virion maturation.

The protein localises to the host nucleus. In terms of biological role, involved in viral genome packaging through its interaction with packaging proteins 1 and 2. After proteolytic cleavage by adenovirus protease, L1 52/55k protein is removed from the capsid during viral maturation. The sequence is that of Packaging protein 3 from Canine adenovirus serotype 1 (strain CLL) (CAdV-1).